The sequence spans 146 residues: Stress-responsive DNAJB4-interacting membrane protein 1 (146 aa).

A signal peptide spans 1-26 (MWPAPCSVGRLLIFFMCSSSGYVVQG). Topologically, residues 27–66 (CGPSPGARTTLGSPLSLWSIKTPSHIFCTRRAINLGFPSP) are extracellular. A helical transmembrane segment spans residues 67–87 (PLVQLIFWSLNAGLDLYLCLI). Topologically, residues 88-94 (SSCGFSQ) are cytoplasmic. A helical transmembrane segment spans residues 95–115 (VFWPVEAFCSFSLSFFALALS). The Extracellular segment spans residues 116–146 (HKFVICRLDQHIFSGFTKSLKNLPPCHRTDI).

Homodimer. Interacts with DNAJB4. In terms of tissue distribution, expressed in brain with higher detection in neurons than astrocytes. Decreased expression in Alzheimer brains. Detected at protein level in brain and cervix.

The protein localises to the membrane. Promotes neuronal cells survival to stress conditions. This Homo sapiens (Human) protein is Stress-responsive DNAJB4-interacting membrane protein 1 (SDIM1).